The sequence spans 515 residues: Tripartite motif-containing protein 5 (515 aa).

Alanine 2 bears the N-acetylalanine mark. Residues 15–60 (CPICLELLTEPLSLPCGHSLCQACITANHKESMLYKEEERSCPVCR) form an RING-type zinc finger. Serine 87 is subject to Phosphoserine. A B box-type zinc finger spans residues 92–133 (QKVDHCARHGEKLLLFCQEDSKVICWLCERSQEHRGHHTFLM). The Zn(2+) site is built by cysteine 97, histidine 100, cysteine 119, and histidine 125. The stretch at 137-225 (AQEYHVKLQT…LTKSETEMVQ (89 aa)) forms a coiled coil. A required for interaction with GABARAP and for autophagy region spans residues 187 to 200 (FEQLREILDWEESN). Residues 283–515 (LKGMLDMFRE…VPMTLCSPSS (233 aa)) form the B30.2/SPRY domain.

Belongs to the TRIM/RBCC family. In terms of assembly, can form homodimers and homotrimers. In addition to lower-order dimerization, also exhibits a higher-order multimerization and both low- and high-order multimerizations are essential for its restriction activity. Interacts with BTBD1 and BTBD2. Interacts with PSMC4, PSMC5, PSMD7 and HSPA8/HSC70. Interacts (via B30.2/SPRY domain) with HSPA1A/B. Interacts with PSMC2, MAP3K7/TAK1, TAB2 and TAB3. Interacts with SQSTM1. Interacts with TRIM6 and TRIM34. Interacts with ULK1 (phosphorylated form), GABARAP, GABARAPL1, GABARAPL2, MAP1LC3A, MAP1LC3C and BECN1. Degraded in a proteasome-independent fashion in the absence of viral infection but in a proteasome-dependent fashion following exposure to restriction sensitive virus. Post-translationally, autoubiquitinated in a RING finger- and UBE2D2-dependent manner. Monoubiquitinated by TRIM21. Deubiquitinated by Yersinia YopJ. Ubiquitination may not lead to proteasomal degradation.

The protein resides in the cytoplasm. It localises to the nucleus. The catalysed reaction is S-ubiquitinyl-[E2 ubiquitin-conjugating enzyme]-L-cysteine + [acceptor protein]-L-lysine = [E2 ubiquitin-conjugating enzyme]-L-cysteine + N(6)-ubiquitinyl-[acceptor protein]-L-lysine.. It functions in the pathway protein modification; protein ubiquitination. Capsid-specific restriction factor that prevents infection from non-host-adapted retroviruses. Blocks viral replication early in the life cycle, after viral entry but before reverse transcription. In addition to acting as a capsid-specific restriction factor, also acts as a pattern recognition receptor that activates innate immune signaling in response to the retroviral capsid lattice. Binding to the viral capsid triggers its E3 ubiquitin ligase activity, and in concert with the heterodimeric ubiquitin conjugating enzyme complex UBE2V1-UBE2N (also known as UBC13-UEV1A complex) generates 'Lys-63'-linked polyubiquitin chains, which in turn are catalysts in the autophosphorylation of the MAP3K7/TAK1 complex (includes TAK1, TAB2, and TAB3). Activation of the MAP3K7/TAK1 complex by autophosphorylation results in the induction and expression of NF-kappa-B and MAPK-responsive inflammatory genes, thereby leading to an innate immune response in the infected cell. Restricts infection by human immunodeficiency virus type 1 (HIV-1) and N-tropic murine leukemia virus (N-MLV). Plays a role in regulating autophagy through activation of autophagy regulator BECN1 by causing its dissociation from its inhibitors BCL2 and TAB2. This chain is Tripartite motif-containing protein 5 (TRIM5), found in Chlorocebus pygerythrus (Vervet monkey).